We begin with the raw amino-acid sequence, 257 residues long: UPF0246 protein AHA_3667 (257 aa).

This sequence belongs to the UPF0246 family.

This is UPF0246 protein AHA_3667 from Aeromonas hydrophila subsp. hydrophila (strain ATCC 7966 / DSM 30187 / BCRC 13018 / CCUG 14551 / JCM 1027 / KCTC 2358 / NCIMB 9240 / NCTC 8049).